The sequence spans 550 residues: Glucose-6-phosphate isomerase (550 aa).

The Proton donor role is filled by E356. Residues H387 and K515 contribute to the active site.

It belongs to the GPI family.

The protein localises to the cytoplasm. The enzyme catalyses alpha-D-glucose 6-phosphate = beta-D-fructose 6-phosphate. It functions in the pathway carbohydrate biosynthesis; gluconeogenesis. Its pathway is carbohydrate degradation; glycolysis; D-glyceraldehyde 3-phosphate and glycerone phosphate from D-glucose: step 2/4. In terms of biological role, catalyzes the reversible isomerization of glucose-6-phosphate to fructose-6-phosphate. The polypeptide is Glucose-6-phosphate isomerase (Vibrio atlanticus (strain LGP32) (Vibrio splendidus (strain Mel32))).